A 416-amino-acid chain; its full sequence is Cyclin-dependent kinase 8 (416 aa).

The tract at residues 1 to 15 (MDYDFKVKLTGERER) is interaction with CCNC. Residues 21–287 (EYEGCKVGRG…SEQAMQDPYF (267 aa)) form the Protein kinase domain. Residues 27–35 (VGRGTYGHV) and Lys52 contribute to the ATP site. Asp151 serves as the catalytic Proton acceptor. The interval 313-416 (EEEPDDKGDK…PQYSHQTHRY (104 aa)) is disordered. The span at 325-343 (QQQQQGNNHTNGTGHPGNQ) shows a compositional bias: low complexity. Polar residues-rich tracts occupy residues 361 to 378 (PTTT…QRSN) and 386 to 416 (PGPS…THRY).

Belongs to the protein kinase superfamily. CMGC Ser/Thr protein kinase family. CDC2/CDKX subfamily. As to quaternary structure, component of the Mediator complex. Interacts with ccnc. Mg(2+) is required as a cofactor.

The protein localises to the nucleus. The catalysed reaction is L-seryl-[protein] + ATP = O-phospho-L-seryl-[protein] + ADP + H(+). It carries out the reaction L-threonyl-[protein] + ATP = O-phospho-L-threonyl-[protein] + ADP + H(+). It catalyses the reaction [DNA-directed RNA polymerase] + ATP = phospho-[DNA-directed RNA polymerase] + ADP + H(+). Functionally, component of the Mediator complex, a coactivator involved in regulated gene transcription of nearly all RNA polymerase II-dependent genes. Mediator functions as a bridge to convey information from gene-specific regulatory proteins to the basal RNA polymerase II transcription machinery. Mediator is recruited to promoters by direct interactions with regulatory proteins and serves as a scaffold for the assembly of a functional pre-initiation complex with RNA polymerase II and the general transcription factors. Phosphorylates the CTD (C-terminal domain) of the large subunit of RNA polymerase II (RNAp II), which may inhibit the formation of a transcription initiation complex. The polypeptide is Cyclin-dependent kinase 8 (cdk8) (Xenopus laevis (African clawed frog)).